A 414-amino-acid polypeptide reads, in one-letter code: Lipoyl synthase, mitochondrial (414 aa).

A mitochondrion-targeting transit peptide spans 1-31 (MAVSTSHFRSLCASRPLSRTAIVGHISCRSY). The tract at residues 31–51 (YATTEPSPSATSTSTTTTARR) is disordered. The segment covering 32-48 (ATTEPSPSATSTSTTTT) has biased composition (low complexity). Residues Cys131, Cys136, Cys142, Cys162, Cys166, Cys169, and Ser377 each contribute to the [4Fe-4S] cluster site. Residues 145–366 (GSDKSAATAT…RQRALDMGFL (222 aa)) form the Radical SAM core domain.

The protein belongs to the radical SAM superfamily. Lipoyl synthase family. [4Fe-4S] cluster serves as cofactor.

The protein resides in the mitochondrion. The enzyme catalyses [[Fe-S] cluster scaffold protein carrying a second [4Fe-4S](2+) cluster] + N(6)-octanoyl-L-lysyl-[protein] + 2 oxidized [2Fe-2S]-[ferredoxin] + 2 S-adenosyl-L-methionine + 4 H(+) = [[Fe-S] cluster scaffold protein] + N(6)-[(R)-dihydrolipoyl]-L-lysyl-[protein] + 4 Fe(3+) + 2 hydrogen sulfide + 2 5'-deoxyadenosine + 2 L-methionine + 2 reduced [2Fe-2S]-[ferredoxin]. Its pathway is protein modification; protein lipoylation via endogenous pathway; protein N(6)-(lipoyl)lysine from octanoyl-[acyl-carrier-protein]: step 2/2. Functionally, catalyzes the radical-mediated insertion of two sulfur atoms into the C-6 and C-8 positions of the octanoyl moiety bound to the lipoyl domains of lipoate-dependent enzymes, thereby converting the octanoylated domains into lipoylated derivatives. The sequence is that of Lipoyl synthase, mitochondrial from Aspergillus fumigatus (strain CBS 144.89 / FGSC A1163 / CEA10) (Neosartorya fumigata).